An 826-amino-acid chain; its full sequence is Ubiquitin carboxyl-terminal hydrolase 16 (826 aa).

The segment at 22–142 (PMCRHIRKGL…QVVDYVRKQA (121 aa)) adopts a UBP-type zinc-finger fold. 12 residues coordinate Zn(2+): Cys24, His26, Cys48, Cys51, Cys74, Cys77, Cys82, His90, His94, His103, Cys116, and Cys119. Lys140 is covalently cross-linked (Glycyl lysine isopeptide (Lys-Gly) (interchain with G-Cter in SUMO2)). Residues 146-190 (TPKPAEKDNGNIELENKKLEKESKNEQEREKKENMAKENPPMNSP) form a disordered region. Basic and acidic residues predominate over residues 149 to 181 (PAEKDNGNIELENKKLEKESKNEQEREKKENMA). Ser189 is subject to Phosphoserine. The USP domain maps to 196–825 (KGLSNLGNTC…QAYLLFYERI (630 aa)). Catalysis depends on Cys205, which acts as the Nucleophile. Basic and acidic residues predominate over residues 394 to 408 (SGKKSVNDKNLKKTM). The disordered stretch occupies residues 394–460 (SGKKSVNDKN…AKNQRRQQKI (67 aa)). Acidic residues predominate over residues 409-420 (EDEDQDSEEEKD). Ser415 is modified (phosphoserine). The span at 421–430 (NDSYIKERSD) shows a compositional bias: basic and acidic residues. Positions 438 to 458 (HLQKKAKKQAKKQAKNQRRQQ) are enriched in basic residues. Ser552 carries the post-translational modification Phosphoserine. Thr557 carries the phosphothreonine modification. Residue His761 is the Proton acceptor of the active site.

It belongs to the peptidase C19 family. USP16 subfamily. Homotetramer. Associates with late pre-40S ribosomes. Interacts with CEP78; promoting deubiquitination of tektins. Phosphorylated at the onset of mitosis and dephosphorylated during the metaphase/anaphase transition. Phosphorylation by AURKB enhances the deubiquitinase activity.

It localises to the nucleus. It catalyses the reaction Thiol-dependent hydrolysis of ester, thioester, amide, peptide and isopeptide bonds formed by the C-terminal Gly of ubiquitin (a 76-residue protein attached to proteins as an intracellular targeting signal).. Its function is as follows. Specifically deubiquitinates 'Lys-120' of histone H2A (H2AK119Ub), a specific tag for epigenetic transcriptional repression, thereby acting as a coactivator. Deubiquitination of histone H2A is a prerequisite for subsequent phosphorylation at 'Ser-11' of histone H3 (H3S10ph), and is required for chromosome segregation when cells enter into mitosis. In resting B- and T-lymphocytes, phosphorylation by AURKB leads to enhance its activity, thereby maintaining transcription in resting lymphocytes. Regulates Hox gene expression via histone H2A deubiquitination. Prefers nucleosomal substrates. Does not deubiquitinate histone H2B. Also deubiquitinates non-histone proteins, such as ribosomal protein RPS27A: deubiquitination of monoubiquitinated RPS27A promotes maturation of the 40S ribosomal subunit. Also mediates deubiquitination of tektin proteins (TEKT1, TEKT2, TEK3, TEKT4 and TEKT5), promoting their stability. In Macaca fascicularis (Crab-eating macaque), this protein is Ubiquitin carboxyl-terminal hydrolase 16.